Reading from the N-terminus, the 352-residue chain is V-type ATP synthase subunit C (352 aa).

Belongs to the V-ATPase V0D/AC39 subunit family.

In terms of biological role, produces ATP from ADP in the presence of a proton gradient across the membrane. The chain is V-type ATP synthase subunit C (atpC) from Deinococcus radiodurans (strain ATCC 13939 / DSM 20539 / JCM 16871 / CCUG 27074 / LMG 4051 / NBRC 15346 / NCIMB 9279 / VKM B-1422 / R1).